Reading from the N-terminus, the 403-residue chain is Adenylate cyclase (403 aa).

A compositionally biased stretch (polar residues) spans 1-16 (MSTEHTNTPRADSPQS). The interval 1-37 (MSTEHTNTPRADSPQSAAEAVRGARQHAPAATPAESD) is disordered. The interval 31-60 (ATPAESDPILELAEAMEGPLRIPAHTPEAV) is pyruvate binding. One can recognise a Guanylate cyclase domain in the interval 238–347 (AVGFADLVSY…PTVNMAARLT (110 aa)). Residues Asp243 and Asp287 each coordinate Mg(2+).

Belongs to the adenylyl cyclase class-3 family. Homodimer. The cofactor is Mg(2+).

Its subcellular location is the cytoplasm. It catalyses the reaction ATP = 3',5'-cyclic AMP + diphosphate. Pyruvate-stimulated. Functionally, plays essential roles in regulation of cellular metabolism by catalyzing the synthesis of a second messenger, cAMP. The chain is Adenylate cyclase (cya) from Glutamicibacter nicotianae (Arthrobacter nicotianae).